Reading from the N-terminus, the 946-residue chain is Sorting nexin-14 (946 aa).

The next 2 membrane-spanning stretches (helical) occupy residues 24-44 (ICRQYPLFCFLLLCLSAASLL) and 49-69 (IHILMIFWSFVAGVVTFYCSL). The 175-residue stretch at 130–304 (SSKVDASLSE…LLIIFIDDSP (175 aa)) folds into the PXA domain. The region spanning 336–468 (ELKQIREQQD…CHSDEYFRQL (133 aa)) is the RGS domain. A Phosphoserine modification is found at Ser548. The PX domain maps to 570 to 690 (PYVDFFEDPS…DFLSPNGGET (121 aa)).

This sequence belongs to the sorting nexin family. Widely expressed both in fetal and adult tissues.

It localises to the lysosome membrane. The protein localises to the late endosome membrane. It is found in the cell projection. Its subcellular location is the dendrite. Its function is as follows. Plays a role in maintaining normal neuronal excitability and synaptic transmission. May be involved in several stages of intracellular trafficking. Required for autophagosome clearance, possibly by mediating the fusion of lysosomes with autophagosomes. Binds phosphatidylinositol 3,5-bisphosphate (PtdIns(3,5)P2), a key component of late endosomes/lysosomes. Does not bind phosphatidylinositol 3-phosphate (PtdIns(3P)). In Homo sapiens (Human), this protein is Sorting nexin-14 (SNX14).